Reading from the N-terminus, the 724-residue chain is Probable protein phosphatase 2C 62 (724 aa).

A disordered region spans residues 357 to 385 (DELISTSEATRHSVDEIAQKPIIDTSEKN). Residues 365–374 (ATRHSVDEIA) are compositionally biased toward basic and acidic residues. The 238-residue stretch at 482–719 (DSGFASLQSP…DAVTVIISFV (238 aa)) folds into the PPM-type phosphatase domain. Positions 514, 515, 643, and 710 each coordinate Mn(2+).

It belongs to the PP2C family. Requires Mg(2+) as cofactor. Mn(2+) serves as cofactor.

The enzyme catalyses O-phospho-L-seryl-[protein] + H2O = L-seryl-[protein] + phosphate. The catalysed reaction is O-phospho-L-threonyl-[protein] + H2O = L-threonyl-[protein] + phosphate. The chain is Probable protein phosphatase 2C 62 from Arabidopsis thaliana (Mouse-ear cress).